The primary structure comprises 304 residues: Cell surface-binding protein OPG105 (304 aa).

The Alpha-carbonic anhydrase domain maps to 1–235; that stretch reads MSQQLSPINI…NDDTEVYYSG (235 aa). The Virion surface segment spans residues 1 to 275; that stretch reads MSQQLSPINI…YQKYIEGNKT (275 aa). The chain crosses the membrane as a helical span at residues 276–294; the sequence is FAIIAIVFVYILTAILFLM. The Intravirion segment spans residues 295–304; sequence SRRYSREKQN.

It belongs to the alpha-carbonic anhydrase family. In terms of assembly, homodimer; disulfide-linked. Post-translationally, apparently non-glycosylated.

The protein localises to the virion membrane. Functionally, binds to chondroitin sulfate on the cell surface to provide virion attachment to target cell. The polypeptide is Cell surface-binding protein OPG105 (OPG105) (Homo sapiens (Human)).